The following is a 1642-amino-acid chain: Cholesterol transporter ABCA5 (1642 aa).

A helical membrane pass occupies residues 32–52 (SVQEILFPLFFLFWLILISMM). N-linked (GlcNAc...) asparagine glycosylation is found at N86 and N190. Transmembrane regions (helical) follow at residues 220 to 240 (VILIYLVIAFSPFGYFLAIHI), 264 to 284 (LSWVLLYTSLIFLMSLLMAVI), 297 to 317 (IVIFLLFFLYGLSSVFFALML), 327 to 347 (VGVVEFFVTVVFGFVGLLIVL), 355 to 375 (LVWLFSPLCQCAFLIGIAQVM), and 396 to 416 (LIITLTMLALDSVFYALLAVY). Residue N458 is glycosylated (N-linked (GlcNAc...) asparagine). The region spanning 478–713 (IRISGIQKAY…WGIGYRLSMY (236 aa)) is the ABC transporter 1 domain. Residue 514–521 (GHSGTGKS) coordinates ATP. Residues 866–886 (LLLLLIFFAVQIFMFLVHHSF) form a helical membrane-spanning segment. N919 carries N-linked (GlcNAc...) asparagine glycosylation. Residues 967-987 (VFTAVFNSTMVYSLPVMMNII) form a helical membrane-spanning segment. Residue N996 is glycosylated (N-linked (GlcNAc...) asparagine). The next 6 membrane-spanning stretches (helical) occupy residues 1021-1041 (LYFQAALLGIIVTAMPPYFAM), 1071-1091 (VVDIPLFFVVLTLMLGSLFAF), 1102-1122 (FLAVVFCLIAYVPSVILFTYI), 1139-1159 (FIYSVTALACVAVTEITFFLG), 1164-1184 (AVFHYTFCIAIPIYPLLGCLI), and 1207-1227 (LLVAVIMPYLQCVLWIFLLQH). The region spanning 1290 to 1533 (IMVYNLHKEY…FGKGYFLEIK (244 aa)) is the ABC transporter 2 domain. 1333-1340 (GPNGAGKS) provides a ligand contact to ATP.

It belongs to the ABC transporter superfamily. ABCA family. N-glycosylated. As to expression, expressed in testis, epididymis, lung and brain.

The protein resides in the lysosome membrane. The protein localises to the late endosome membrane. It is found in the golgi apparatus membrane. Its subcellular location is the cell membrane. The enzyme catalyses cholesterol(in) + ATP + H2O = cholesterol(out) + ADP + phosphate + H(+). In terms of biological role, cholesterol efflux transporter in macrophages that is responsible for APOAI/high-density lipoproteins (HDL) formation at the plasma membrane under high cholesterol levels and participates in reverse cholesterol transport. May play a role in the processing of autolysosomes. The polypeptide is Cholesterol transporter ABCA5 (Rattus norvegicus (Rat)).